A 258-amino-acid chain; its full sequence is UPF0246 protein Sfri_2896 (258 aa).

It belongs to the UPF0246 family.

In Shewanella frigidimarina (strain NCIMB 400), this protein is UPF0246 protein Sfri_2896.